Reading from the N-terminus, the 303-residue chain is Probable 5-dehydro-4-deoxyglucarate dehydratase (303 aa).

The protein belongs to the DapA family.

It carries out the reaction 5-dehydro-4-deoxy-D-glucarate + H(+) = 2,5-dioxopentanoate + CO2 + H2O. It functions in the pathway carbohydrate acid metabolism; D-glucarate degradation; 2,5-dioxopentanoate from D-glucarate: step 2/2. The chain is Probable 5-dehydro-4-deoxyglucarate dehydratase from Paracidovorax citrulli (strain AAC00-1) (Acidovorax citrulli).